A 466-amino-acid chain; its full sequence is Ribulose bisphosphate carboxylase large chain (466 aa).

N6,N6,N6-trimethyllysine is present on Lys5. The substrate site is built by Asn114 and Thr164. Lys166 acts as the Proton acceptor in catalysis. Residue Lys168 participates in substrate binding. The Mg(2+) site is built by Lys192, Asp194, and Glu195. Lys192 is modified (N6-carboxylysine). The active-site Proton acceptor is the His285. The substrate site is built by Arg286, His318, and Ser370.

The protein belongs to the RuBisCO large chain family. Type I subfamily. Heterohexadecamer of 8 large chains and 8 small chains; disulfide-linked. The disulfide link is formed within the large subunit homodimers. The cofactor is Mg(2+). The disulfide bond which can form in the large chain dimeric partners within the hexadecamer appears to be associated with oxidative stress and protein turnover.

The protein resides in the plastid. It is found in the chloroplast. The enzyme catalyses 2 (2R)-3-phosphoglycerate + 2 H(+) = D-ribulose 1,5-bisphosphate + CO2 + H2O. It carries out the reaction D-ribulose 1,5-bisphosphate + O2 = 2-phosphoglycolate + (2R)-3-phosphoglycerate + 2 H(+). Functionally, ruBisCO catalyzes two reactions: the carboxylation of D-ribulose 1,5-bisphosphate, the primary event in carbon dioxide fixation, as well as the oxidative fragmentation of the pentose substrate in the photorespiration process. Both reactions occur simultaneously and in competition at the same active site. In Cucurbita pepo (Vegetable marrow), this protein is Ribulose bisphosphate carboxylase large chain.